A 270-amino-acid polypeptide reads, in one-letter code: Eukaryotic translation initiation factor 2 subunit beta (270 aa).

Residues 1-38 (MADEEQMERKEEATEIAPFDPTKKKKKKKVVIQDPADE) are disordered.

The protein belongs to the eIF-2-beta/eIF-5 family. In terms of assembly, eukaryotic translation initiation factor 2 eIF2 is a heterotrimeric complex composed of an alpha, a beta and a gamma subunit.

It is found in the cytoplasm. The protein resides in the cytosol. In terms of biological role, component of the eIF2 complex that functions in the early steps of protein synthesis by forming a ternary complex with GTP and initiator tRNA. This complex binds to a 40S ribosomal subunit, followed by mRNA binding to form a 43S pre-initiation complex (43S PIC). Junction of the 60S ribosomal subunit to form the 80S initiation complex is preceded by hydrolysis of the GTP bound to eIF2 and release of an eIF2-GDP binary complex. In order for eIF2 to recycle and catalyze another round of initiation, the GDP bound to eIF2 must exchange with GTP by way of a reaction catalyzed by eIF2B. In Triticum aestivum (Wheat), this protein is Eukaryotic translation initiation factor 2 subunit beta.